The following is a 349-amino-acid chain: Mediator of RNA polymerase II transcription subunit 19 (349 aa).

Over residues 1 to 28 the composition is skewed to low complexity; that stretch reads MSFHPQTPQSPSHFSPSSSDQSTSMSGS. 2 disordered regions span residues 1–81 and 238–349; these read MSFH…EQKK and AHLN…VSGI. The segment covering 29 to 53 has biased composition (polar residues); sequence IVSTTTTLPTPAHSVNGSSLANDMS. The span at 70–81 shows a compositional bias: basic and acidic residues; the sequence is TSDDVGDREQKK. Residues 330–341 show a composition bias toward low complexity; that stretch reads QSYAQARQQSSY.

Belongs to the Mediator complex subunit 19 family. In terms of assembly, component of the Mediator complex.

It is found in the nucleus. Functionally, component of the Mediator complex, a coactivator involved in the regulated transcription of nearly all RNA polymerase II-dependent genes. Mediator functions as a bridge to convey information from gene-specific regulatory proteins to the basal RNA polymerase II transcription machinery. Mediator is recruited to promoters by direct interactions with regulatory proteins and serves as a scaffold for the assembly of a functional preinitiation complex with RNA polymerase II and the general transcription factors. The protein is Mediator of RNA polymerase II transcription subunit 19 (rox3) of Neurospora crassa (strain ATCC 24698 / 74-OR23-1A / CBS 708.71 / DSM 1257 / FGSC 987).